A 513-amino-acid polypeptide reads, in one-letter code: L-arabinose transport ATP-binding protein AraG (513 aa).

ABC transporter domains are found at residues 6 to 243 (LEMR…GMVG) and 264 to 508 (VKNW…TKTA). Residue 38-45 (GENGAGKS) participates in ATP binding.

The protein belongs to the ABC transporter superfamily.

It is found in the cell membrane. It catalyses the reaction L-arabinose(out) + ATP + H2O = L-arabinose(in) + ADP + phosphate + H(+). Its function is as follows. Part of the binding-protein-dependent transport system for L-arabinose. Probably responsible for energy coupling to the transport system. This is L-arabinose transport ATP-binding protein AraG (araG) from Geobacillus stearothermophilus (Bacillus stearothermophilus).